A 551-amino-acid polypeptide reads, in one-letter code: Rhodopsin kinase grk7-a (551 aa).

A Phosphoserine modification is found at Ser-36. The region spanning 57 to 174 (YQSICVEQPI…QNSPFYDRFL (118 aa)) is the RGS domain. The Protein kinase domain occupies 189–451 (FYEFRILGKG…DDDPRKHAFF (263 aa)). ATP contacts are provided by residues 195–203 (LGKGGFGEV) and Lys-218. The Proton acceptor role is filled by Asp-314. Residues 452–517 (KSINFQRLEA…GAIPISWQKE (66 aa)) enclose the AGC-kinase C-terminal domain. Ser-487 carries the post-translational modification Phosphoserine. Positions 529–551 (DPSREATGGGGNSGEKSGVCSIL) are disordered. Low complexity predominate over residues 542–551 (GEKSGVCSIL). Cys-548 carries the cysteine methyl ester modification. The S-geranylgeranyl cysteine moiety is linked to residue Cys-548. Residues 549–551 (SIL) constitute a propeptide, removed in mature form.

The protein belongs to the protein kinase superfamily. AGC Ser/Thr protein kinase family. GPRK subfamily. Post-translationally, autophosphorylated in vitro at Ser-487. Phosphorylation at Ser-36 is regulated by light and activated by cAMP.

Its subcellular location is the membrane. It catalyses the reaction L-threonyl-[rhodopsin] + ATP = O-phospho-L-threonyl-[rhodopsin] + ADP + H(+). It carries out the reaction L-seryl-[rhodopsin] + ATP = O-phospho-L-seryl-[rhodopsin] + ADP + H(+). In terms of biological role, retina-specific kinase involved in the shutoff of the photoresponse and adaptation to changing light conditions via cone opsin phosphorylation, including rhodopsin (RHO). In Xenopus laevis (African clawed frog), this protein is Rhodopsin kinase grk7-a (grk7-a).